A 232-amino-acid polypeptide reads, in one-letter code: Aquaporin Z (232 aa).

Transmembrane regions (helical) follow at residues 8–28 and 33–53; these read AFGT…AAGF and IGLL…AFAI. Positions 62 to 64 match the NPA 1 motif; that stretch reads NPA. 3 consecutive transmembrane segments (helical) span residues 84-104, 130-150, and 159-179; these read IIAQ…IATG, MLAA…VIMG, and GFAP…SIPV. Residues 185–187 carry the NPA 2 motif; it reads NPA. A helical transmembrane segment spans residues 201 to 221; the sequence is VSQLWLFWVAPIVGGVLGAVI.

It belongs to the MIP/aquaporin (TC 1.A.8) family. Homotetramer.

It is found in the cell inner membrane. The catalysed reaction is H2O(in) = H2O(out). In terms of biological role, channel that permits osmotically driven movement of water in both directions. It is involved in the osmoregulation and in the maintenance of cell turgor during volume expansion in rapidly growing cells. It mediates rapid entry or exit of water in response to abrupt changes in osmolarity. This is Aquaporin Z from Vibrio parahaemolyticus serotype O3:K6 (strain RIMD 2210633).